The chain runs to 37 residues: Cytochrome b6-f complex subunit 5 (37 aa).

The helical transmembrane segment at 5–25 (FLFGIVLGLIPITLAGLFVTA) threads the bilayer.

The protein belongs to the PetG family. The 4 large subunits of the cytochrome b6-f complex are cytochrome b6, subunit IV (17 kDa polypeptide, PetD), cytochrome f and the Rieske protein, while the 4 small subunits are PetG, PetL, PetM and PetN. The complex functions as a dimer.

It localises to the plastid. The protein resides in the chloroplast thylakoid membrane. Functionally, component of the cytochrome b6-f complex, which mediates electron transfer between photosystem II (PSII) and photosystem I (PSI), cyclic electron flow around PSI, and state transitions. PetG is required for either the stability or assembly of the cytochrome b6-f complex. This is Cytochrome b6-f complex subunit 5 from Solanum lycopersicum (Tomato).